Reading from the N-terminus, the 547-residue chain is G protein-coupled receptor associated sorting protein 3 (547 aa).

Composition is skewed to basic residues over residues 1–10 (MTGTKNKTRA) and 38–48 (AKTRAKAKAKT). Residues 1 to 53 (MTGTKNKTRAQAKTEKKPVTQAKAGAEREATGVVRPVAKTRAKAKAKTGSKTD) are disordered.

Belongs to the GPRASP family. In terms of assembly, homodimer.

It is found in the cytoplasm. It localises to the nucleus. In terms of biological role, survival and differentiation promoting protein that plays a role in the regulation of neurosynaptogenesis. Induces phosphatase PP2A activity which results in APP dephosphorylation and inhibits BACE1-mediated processing of APP. In Macaca fascicularis (Crab-eating macaque), this protein is G protein-coupled receptor associated sorting protein 3 (GPRASP3).